A 309-amino-acid chain; its full sequence is Electron transfer flavoprotein subunit alpha (309 aa).

FAD is bound at residue 253–281 (LYIAVGISGAIQHLAGMKDSKVIVAINKD).

The protein belongs to the ETF alpha-subunit/FixB family. As to quaternary structure, heterodimer of an alpha and a beta subunit. Requires FAD as cofactor.

Functionally, the electron transfer flavoprotein serves as a specific electron acceptor for other dehydrogenases. It transfers the electrons to the main respiratory chain via ETF-ubiquinone oxidoreductase (ETF dehydrogenase). The polypeptide is Electron transfer flavoprotein subunit alpha (etfA) (Pseudomonas aeruginosa (strain ATCC 15692 / DSM 22644 / CIP 104116 / JCM 14847 / LMG 12228 / 1C / PRS 101 / PAO1)).